The primary structure comprises 389 residues: Lipid-A-disaccharide synthase (389 aa).

Belongs to the LpxB family.

The enzyme catalyses a lipid X + a UDP-2-N,3-O-bis[(3R)-3-hydroxyacyl]-alpha-D-glucosamine = a lipid A disaccharide + UDP + H(+). It participates in bacterial outer membrane biogenesis; LPS lipid A biosynthesis. Functionally, condensation of UDP-2,3-diacylglucosamine and 2,3-diacylglucosamine-1-phosphate to form lipid A disaccharide, a precursor of lipid A, a phosphorylated glycolipid that anchors the lipopolysaccharide to the outer membrane of the cell. This is Lipid-A-disaccharide synthase from Burkholderia orbicola (strain MC0-3).